The following is a 1389-amino-acid chain: DNA-directed RNA polymerase subunit beta'' (1389 aa).

C224, C295, C302, and C305 together coordinate Zn(2+).

This sequence belongs to the RNA polymerase beta' chain family. RpoC2 subfamily. In plastids the minimal PEP RNA polymerase catalytic core is composed of four subunits: alpha, beta, beta', and beta''. When a (nuclear-encoded) sigma factor is associated with the core the holoenzyme is formed, which can initiate transcription. Requires Zn(2+) as cofactor.

The protein localises to the plastid. The protein resides in the chloroplast. It catalyses the reaction RNA(n) + a ribonucleoside 5'-triphosphate = RNA(n+1) + diphosphate. Functionally, DNA-dependent RNA polymerase catalyzes the transcription of DNA into RNA using the four ribonucleoside triphosphates as substrates. This Atropa belladonna (Belladonna) protein is DNA-directed RNA polymerase subunit beta''.